A 2058-amino-acid chain; its full sequence is Protein Daple (2058 aa).

The 121-residue stretch at 11-131 (HFLESPLVTW…KILLLMLGCA (121 aa)) folds into the Calponin-homology (CH) domain. Coiled coils occupy residues 195–221 (HLKRLIDERDECKEVIVDLTQERDYLQ), 247–428 (EDKK…SMNE), 455–1016 (ELNE…LRGA), 1043–1082 (ELLKFKDRTIELERNNAALQAEKKLFREQLQHLESHNLNL), and 1108–1388 (ANLQ…KFYD). Disordered stretches follow at residues 1406 to 1444 (LIKPKKEPSRESVKSPTDVQSKTMDNAEMAASPSSMRPL), 1480 to 1592 (HRMS…EDMI), 1617 to 1655 (TKNRESPVNRNSLHLYDYPEKKNSSRTPTRPRPGSPGSE), 1696 to 1724 (LHPSSQSPSPTLHLKDPSQTAVPKSLPSA), 1831 to 1857 (YSATSSSQSPEPQALSPHGAMGSRGNS), 1940 to 1959 (LALPKEETTPPQPAPSASSL), and 1988 to 2051 (PVRP…PQTV). The span at 1409 to 1418 (PKKEPSRESV) shows a compositional bias: basic and acidic residues. Residues 1419 to 1429 (KSPTDVQSKTM) show a composition bias toward polar residues. A compositionally biased stretch (basic and acidic residues) spans 1494 to 1506 (GPEHLSRSRRMES). Polar residues predominate over residues 1552-1577 (NAGSSRVPWTSSLEVSRSASNSSSPL). 2 consecutive short sequence motifs (GBA) follow at residues 1653-1675 (GSEMVTLEEFLQESSRQSPPSRR) and 1676-1697 (HSLNDSELITLHQFLFEAETLH). Residues 1831–1841 (YSATSSSQSPE) are compositionally biased toward polar residues. The segment covering 2039–2048 (PASPDPSADP) has biased composition (low complexity). Positions 2055–2058 (YGCV) match the PDZ-binding motif.

This sequence belongs to the CCDC88 family. As to quaternary structure, interacts with dvl2/dsh via the PDZ-binding motif. Expressed weakly in gastrulae, with slightly stronger expression in the dorsal region. In neurulae, expressed in the neural plate with strong expression in the presumptive mesencephalic region. At the tailbud stage, expressed in somatic cells and in part of the tail. Also strongly expressed in regions of the head including eye vesicles, otic vesicles, olfactory placode and the pharyngeal cavity.

The protein resides in the cytoplasm. It is found in the cell junction. Its function is as follows. Positive regulator of Wnt signaling, acting synergistically with dvl2/dsh. Functions upstream of ctnnb1/beta-catenin in the canonical Wnt pathway, and also activates jnk in the Wnt/planar cell polarity (PCP) pathway. Acts as a non-receptor guanine nucleotide exchange factor which binds to and activates guanine nucleotide-binding protein G(i) alpha subunits. This promotes apical cell constriction and subsequent bending of the neural plate during neurulation via arhgef18. This chain is Protein Daple (ccdc88c), found in Xenopus laevis (African clawed frog).